The following is a 197-amino-acid chain: Shikimate kinase (197 aa).

An ATP-binding site is contributed by G26–R31. Residue S30 coordinates Mg(2+). Residues D48, R72, and G94 each contribute to the substrate site. R132 is a binding site for ATP. R150 provides a ligand contact to substrate.

It belongs to the shikimate kinase family. Monomer. The cofactor is Mg(2+).

It is found in the cytoplasm. The catalysed reaction is shikimate + ATP = 3-phosphoshikimate + ADP + H(+). Its pathway is metabolic intermediate biosynthesis; chorismate biosynthesis; chorismate from D-erythrose 4-phosphate and phosphoenolpyruvate: step 5/7. Its function is as follows. Catalyzes the specific phosphorylation of the 3-hydroxyl group of shikimic acid using ATP as a cosubstrate. The sequence is that of Shikimate kinase from Prochlorococcus marinus (strain MIT 9211).